A 515-amino-acid chain; its full sequence is Protein translocase subunit SecD (515 aa).

A helical membrane pass occupies residues 6-26 (LYSLIFIIILTAFAVWVDLPG). The disordered stretch occupies residues 141 to 186 (AITNGNQNQNSTKNGTPTPGTTPTPESTPQANQTPVAANVTPTPED). A compositionally biased stretch (low complexity) spans 150-169 (NSTKNGTPTPGTTPTPESTP). A compositionally biased stretch (polar residues) spans 170–186 (QANQTPVAANVTPTPED). 5 helical membrane passes run 322-342 (RSIR…ILYY), 344-364 (LPGF…FALF), 367-387 (IPVT…GMAV), 427-447 (ISTL…GASV), and 450-470 (GFAI…IFVT).

It belongs to the SecD/SecF family. SecD subfamily. As to quaternary structure, forms a complex with SecF. Part of the essential Sec protein translocation apparatus which comprises SecA, SecYEG and auxiliary proteins SecDF. Other proteins may also be involved.

It localises to the cell membrane. Functionally, part of the Sec protein translocase complex. Interacts with the SecYEG preprotein conducting channel. SecDF uses the proton motive force (PMF) to complete protein translocation after the ATP-dependent function of SecA. The chain is Protein translocase subunit SecD from Thermobaculum terrenum (strain ATCC BAA-798 / CCMEE 7001 / YNP1).